Reading from the N-terminus, the 433-residue chain is Dihydroorotase (433 aa).

Residues His63 and His65 each contribute to the Zn(2+) site. Residues 65–67 (HLR) and Asn97 contribute to the substrate site. Zn(2+) contacts are provided by Asp155, His182, and His235. Asn283 serves as a coordination point for substrate. Asp310 is a binding site for Zn(2+). The active site involves Asp310. Substrate is bound at residue His314.

It belongs to the metallo-dependent hydrolases superfamily. DHOase family. Class I DHOase subfamily. Zn(2+) serves as cofactor.

The catalysed reaction is (S)-dihydroorotate + H2O = N-carbamoyl-L-aspartate + H(+). The protein operates within pyrimidine metabolism; UMP biosynthesis via de novo pathway; (S)-dihydroorotate from bicarbonate: step 3/3. Its function is as follows. Catalyzes the reversible cyclization of carbamoyl aspartate to dihydroorotate. The sequence is that of Dihydroorotase from Anaeromyxobacter dehalogenans (strain 2CP-C).